A 323-amino-acid polypeptide reads, in one-letter code: Phospho-N-acetylmuramoyl-pentapeptide-transferase (323 aa).

Helical transmembrane passes span 12–32, 58–78, 84–104, 120–140, 151–171, 177–197, 200–220, 229–250, and 303–323; these read IVMA…IIIP, PTIG…IMVG, AMIA…DDLL, MILL…YIGT, INFG…VTNA, GLDG…GIIS, LGHI…LAFL, VFMG…ALIL, and KIVS…FASL.

The protein belongs to the glycosyltransferase 4 family. MraY subfamily. The cofactor is Mg(2+).

It is found in the cell membrane. It carries out the reaction UDP-N-acetyl-alpha-D-muramoyl-L-alanyl-gamma-D-glutamyl-meso-2,6-diaminopimeloyl-D-alanyl-D-alanine + di-trans,octa-cis-undecaprenyl phosphate = di-trans,octa-cis-undecaprenyl diphospho-N-acetyl-alpha-D-muramoyl-L-alanyl-D-glutamyl-meso-2,6-diaminopimeloyl-D-alanyl-D-alanine + UMP. The protein operates within cell wall biogenesis; peptidoglycan biosynthesis. Functionally, catalyzes the initial step of the lipid cycle reactions in the biosynthesis of the cell wall peptidoglycan: transfers peptidoglycan precursor phospho-MurNAc-pentapeptide from UDP-MurNAc-pentapeptide onto the lipid carrier undecaprenyl phosphate, yielding undecaprenyl-pyrophosphoryl-MurNAc-pentapeptide, known as lipid I. In Clostridium perfringens (strain ATCC 13124 / DSM 756 / JCM 1290 / NCIMB 6125 / NCTC 8237 / Type A), this protein is Phospho-N-acetylmuramoyl-pentapeptide-transferase.